Consider the following 122-residue polypeptide: Serum amyloid A-2 protein (122 aa).

A signal peptide spans 1-19 (MKLLTSLVFCSLLLGVCHG). Residues 89 to 108 (RGHEDTMADQEANRHGRSGK) are compositionally biased toward basic and acidic residues. The interval 89–122 (RGHEDTMADQEANRHGRSGKDPNYYRPPGLPAKY) is disordered.

It belongs to the SAA family. In terms of assembly, apolipoprotein of the HDL complex. As to expression, expressed by the liver; secreted in plasma.

It localises to the secreted. In terms of biological role, major acute phase reactant. The protein is Serum amyloid A-2 protein of Mus musculus (Mouse).